Consider the following 1071-residue polypeptide: Carbamoyl phosphate synthase large chain (1071 aa).

Residues 1 to 399 form a carboxyphosphate synthetic domain region; sequence MPKREDIKKV…SLLKAFKSLD (399 aa). 12 residues coordinate ATP: arginine 129, arginine 169, glycine 175, glycine 176, glutamate 208, valine 210, glutamate 215, glycine 241, valine 242, histidine 243, glutamine 284, and glutamate 296. Positions 133–325 constitute an ATP-grasp 1 domain; it reads KETMLRIGEK…IARVTAKIAI (193 aa). Mg(2+) is bound by residues glutamine 284, glutamate 296, and asparagine 298. Residues glutamine 284, glutamate 296, and asparagine 298 each coordinate Mn(2+). Positions 400–540 are oligomerization domain; it reads IDNQLGNKHW…YSTYEDSCET (141 aa). Positions 541–932 are carbamoyl phosphate synthetic domain; the sequence is NATTDKKKIL…YKAELAADNV (392 aa). The region spanning 673 to 864 is the ATP-grasp 2 domain; that stretch reads YILMKELGVP…LAKIAAKVIA (192 aa). ATP is bound by residues arginine 709, aspartate 748, leucine 750, glutamate 755, glycine 780, valine 781, histidine 782, serine 783, glutamine 823, and glutamate 835. Mg(2+) contacts are provided by glutamine 823, glutamate 835, and asparagine 837. Residues glutamine 823, glutamate 835, and asparagine 837 each contribute to the Mn(2+) site. The region spanning 931–1071 is the MGS-like domain; it reads NVLPLTGKVF…INEYHKEMEN (141 aa). The segment at 933 to 1071 is allosteric domain; the sequence is LPLTGKVFLS…INEYHKEMEN (139 aa).

The protein belongs to the CarB family. Composed of two chains; the small (or glutamine) chain promotes the hydrolysis of glutamine to ammonia, which is used by the large (or ammonia) chain to synthesize carbamoyl phosphate. Tetramer of heterodimers (alpha,beta)4. It depends on Mg(2+) as a cofactor. Mn(2+) serves as cofactor.

The catalysed reaction is hydrogencarbonate + L-glutamine + 2 ATP + H2O = carbamoyl phosphate + L-glutamate + 2 ADP + phosphate + 2 H(+). The enzyme catalyses hydrogencarbonate + NH4(+) + 2 ATP = carbamoyl phosphate + 2 ADP + phosphate + 2 H(+). Its pathway is amino-acid biosynthesis; L-arginine biosynthesis; carbamoyl phosphate from bicarbonate: step 1/1. It participates in pyrimidine metabolism; UMP biosynthesis via de novo pathway; (S)-dihydroorotate from bicarbonate: step 1/3. In terms of biological role, large subunit of the glutamine-dependent carbamoyl phosphate synthetase (CPSase). CPSase catalyzes the formation of carbamoyl phosphate from the ammonia moiety of glutamine, carbonate, and phosphate donated by ATP, constituting the first step of 2 biosynthetic pathways, one leading to arginine and/or urea and the other to pyrimidine nucleotides. The large subunit (synthetase) binds the substrates ammonia (free or transferred from glutamine from the small subunit), hydrogencarbonate and ATP and carries out an ATP-coupled ligase reaction, activating hydrogencarbonate by forming carboxy phosphate which reacts with ammonia to form carbamoyl phosphate. In Methanosarcina barkeri (strain Fusaro / DSM 804), this protein is Carbamoyl phosphate synthase large chain.